Here is a 757-residue protein sequence, read N- to C-terminus: MTSGLLTPIKVTKKRLLSCAAALAFSAAVPVAFAQEDTGTAITSSDNGGHPGDWLSYGRSYSEQRYSPLDQINTENVGKLKLAWHYDLDTNRGQEGTPLIVNGVMYATTNWSKMKALDAATGKLLWSYDPKVPGNIADRGCCDTVSRGAAYWNGKVYFGTFDGRLIALDAKTGKLVWSVYTIPKEAQLGHQRSYTVDGAPRIAKGKVLIGNGGAEFGARGFVSAFDAETGKLDWRFFTVPNPENKPDGAASDDILMSKAYPTWGKNGAWKQQGGGGTVWDSLVYDPVTDLVYLGVGNGSPWNYKFRSEGKGDNLFLGSIVAINPDTGKYVWHFQETPMDEWDYTSVQQIMTLDMPVNGEMRHVIVHAPKNGFFYIIDAKTGKFITGKPYTYENWANGLDPVTGRPNYVPDALWTLTGKPWLGIPGELGGHNFAAMAYSPKTKLVYIPAQQIPLLYDGQKGGFKAYHDAWNLGLDMNKIGLFDDNDPEHVAAKKDFLKVLKGWTVAWDPEKMAPAFTINHKGPWNGGLLATAGNVIFQGLANGEFHAYDATNGNDLYSFPAQSAIIAPPVTYTANGKQYVAVEVGWGGIYPFLYGGVARTSGWTVNHSRVIAFSLDGKDSLPPKNELGFTPVKPVPTYDEARQKDGYFMYQTFCSACHGDNAISGGVLPDLRWSGAPRGRESFYKLVGRGALTAYGMDRFDTSMTPEQIEDIRNFIVKRANESYDDEVKARENSTGVPNDQFLNVPQSTADVPTADHP.

A signal peptide spans 1–34 (MTSGLLTPIKVTKKRLLSCAAALAFSAAVPVAFA). Position 35 is a pyrrolidone carboxylic acid (Gln-35). Glu-95 lines the pyrroloquinoline quinone pocket. An intrachain disulfide couples Cys-141 to Cys-142. Arg-147 contacts pyrroloquinoline quinone. A Ca(2+)-binding site is contributed by Glu-215. Thr-277 serves as a coordination point for pyrroloquinoline quinone. 2 residues coordinate Ca(2+): Asn-297 and Asp-342. The active-site Proton acceptor is Asp-342. Pyrroloquinoline quinone is bound by residues Lys-369 and Ile-588. Residues 640 to 719 (ARQKDGYFMY…DIRNFIVKRA (80 aa)) form the Cytochrome c domain. Cys-653, Cys-656, His-657, and Met-696 together coordinate heme c. The segment at 726-757 (EVKARENSTGVPNDQFLNVPQSTADVPTADHP) is disordered. Residues 732 to 750 (NSTGVPNDQFLNVPQSTAD) are compositionally biased toward polar residues.

It belongs to the bacterial PQQ dehydrogenase family. In terms of assembly, the alcohol dehydrogenase multicomponent enzyme system is composed of a dehydrogenase subunit I (AdhA), a cytochrome c subunit II (AdhB) and a subunit III (AdhS). Pyrroloquinoline quinone is required as a cofactor. The cofactor is Ca(2+). It depends on heme c as a cofactor.

Its subcellular location is the cell membrane. The enzyme catalyses ethanol + a ubiquinone = a ubiquinol + acetaldehyde. Its activity is regulated as follows. 2,6-dichloro-4-dicyanovinylphenol (PC16) and antimycin A inhibit ubiquinol oxidation activity more selectively than the ubiquinone reductase activity. Functionally, dehydrogenase component of the alcohol dehydrogenase multicomponent enzyme system which is involved in the production of acetic acid and in the ethanol oxidase respiratory chain. Quinohemoprotein alcohol dehydrogenase (ADH) catalyzes the oxidation of ethanol to acetaldehyde by transferring electrons to the ubiquinone embedded in the membrane phospholipids. The electrons transfer from ethanol to membranous ubiquinone occurs from pyrroloquinoline quinone (PQQ) to one heme c in subunit I (AdhA), and finally to two heme c in subunit II (AdhB). Besides ubiquinone reduction, ADH also has a ubiquinol (QH2) oxidation reaction which mediates electron transfer from ubiquinol to the non-energy generating bypass oxidase system. The electrons transfer occurs from ubiquinol (QH2) to the additional heme c within subunit II (AdhB). Also able to use quinone analogs such as 2,3-dimethoxy-5-methyl-6-n-decyl-1,4-benzoquinone (DB) and 2,3-dimethoxy-5-methyl-6-n-pentyl-1,4-benzoquinone (PB). The polypeptide is Alcohol dehydrogenase (quinone), dehydrogenase subunit (Gluconobacter oxydans (strain 621H) (Gluconobacter suboxydans)).